Reading from the N-terminus, the 334-residue chain is Biotin synthase (334 aa).

In terms of domain architecture, Radical SAM core spans 54–281 (QAIQLSTLLS…KSYVRLSAGR (228 aa)). The [4Fe-4S] cluster site is built by Cys69, Cys73, and Cys76. Residues Cys113, Cys144, Cys204, and Arg276 each contribute to the [2Fe-2S] cluster site.

It belongs to the radical SAM superfamily. Biotin synthase family. In terms of assembly, homodimer. [4Fe-4S] cluster serves as cofactor. It depends on [2Fe-2S] cluster as a cofactor.

The catalysed reaction is (4R,5S)-dethiobiotin + (sulfur carrier)-SH + 2 reduced [2Fe-2S]-[ferredoxin] + 2 S-adenosyl-L-methionine = (sulfur carrier)-H + biotin + 2 5'-deoxyadenosine + 2 L-methionine + 2 oxidized [2Fe-2S]-[ferredoxin]. Its pathway is cofactor biosynthesis; biotin biosynthesis; biotin from 7,8-diaminononanoate: step 2/2. In terms of biological role, catalyzes the conversion of dethiobiotin (DTB) to biotin by the insertion of a sulfur atom into dethiobiotin via a radical-based mechanism. This chain is Biotin synthase, found in Haemophilus ducreyi (strain 35000HP / ATCC 700724).